Here is a 419-residue protein sequence, read N- to C-terminus: Carboxypeptidase A2 (419 aa).

The first 18 residues, M1–C18, serve as a signal peptide directing secretion. The propeptide at L19–R114 is activation peptide. The Peptidase M14 domain occupies A122–V414. Zn(2+) is bound by residues H179 and E182. Residues H179–E182, R237, and N254–R255 contribute to the substrate site. A disulfide bridge connects residues C248 and C271. H306 is a binding site for Zn(2+). S307 to Y308 contacts substrate. A disulfide bond links C320 and C354. Residue Y358 participates in substrate binding. The Proton donor/acceptor role is filled by E380.

This sequence belongs to the peptidase M14 family. The cofactor is Zn(2+).

It is found in the secreted. It carries out the reaction Similar to that of carboxypeptidase A (EC 3.4.17.1), but with a preference for bulkier C-terminal residues.. In terms of biological role, carboxypeptidase that catalyzes the release of a C-terminal amino acid, with a preference for large aromatic C-terminal residues. The sequence is that of Carboxypeptidase A2 (CPA2) from Homo sapiens (Human).